The sequence spans 694 residues: DNA-directed RNA polymerase subunit beta' (694 aa).

Zn(2+) contacts are provided by Cys69, Cys71, Cys87, and Cys90. The Mg(2+) site is built by Asp489, Asp491, and Asp493.

This sequence belongs to the RNA polymerase beta' chain family. RpoC1 subfamily. In plastids the minimal PEP RNA polymerase catalytic core is composed of four subunits: alpha, beta, beta', and beta''. When a (nuclear-encoded) sigma factor is associated with the core the holoenzyme is formed, which can initiate transcription. Requires Mg(2+) as cofactor. It depends on Zn(2+) as a cofactor.

The protein resides in the plastid. It localises to the chloroplast. It catalyses the reaction RNA(n) + a ribonucleoside 5'-triphosphate = RNA(n+1) + diphosphate. Functionally, DNA-dependent RNA polymerase catalyzes the transcription of DNA into RNA using the four ribonucleoside triphosphates as substrates. In Adiantum capillus-veneris (Maidenhair fern), this protein is DNA-directed RNA polymerase subunit beta'.